The primary structure comprises 504 residues: Cytochrome P450 71B4 (504 aa).

Residues 1 to 21 (MVSLLSFFLLLLVPIFFLLIF) form a helical membrane-spanning segment. Cys446 is a binding site for heme.

The protein belongs to the cytochrome P450 family. It depends on heme as a cofactor.

Its subcellular location is the membrane. This chain is Cytochrome P450 71B4 (CYP71B4), found in Arabidopsis thaliana (Mouse-ear cress).